Consider the following 349-residue polypeptide: Bifunctional protein FolKE (349 aa).

The segment at 1 to 226 (MQTTYLSMGS…LFEIDSSKND (226 aa)) is 2-amino-4-hydroxy-6-hydroxymethyldihydropteridine pyrophosphokinase. A GTP cyclohydrolase 1 region spans residues 226 to 349 (DSIVLIKDIP…KRMEFLESLL (124 aa)).

In the N-terminal section; belongs to the HPPK family. This sequence in the C-terminal section; belongs to the GTP cyclohydrolase I family. In terms of assembly, homomer.

The enzyme catalyses 6-hydroxymethyl-7,8-dihydropterin + ATP = (7,8-dihydropterin-6-yl)methyl diphosphate + AMP + H(+). It catalyses the reaction GTP + H2O = 7,8-dihydroneopterin 3'-triphosphate + formate + H(+). It functions in the pathway cofactor biosynthesis; 7,8-dihydroneopterin triphosphate biosynthesis; 7,8-dihydroneopterin triphosphate from GTP: step 1/1. The protein operates within cofactor biosynthesis; tetrahydrofolate biosynthesis; 2-amino-4-hydroxy-6-hydroxymethyl-7,8-dihydropteridine diphosphate from 7,8-dihydroneopterin triphosphate: step 4/4. This Lactococcus lactis subsp. cremoris (strain MG1363) protein is Bifunctional protein FolKE (folKE).